The chain runs to 223 residues: ATP synthase subunit a 1 (223 aa).

The next 5 helical transmembrane spans lie at 20–40 (QTIV…AFLT), 78–98 (YLSY…FTII), 107–127 (SLST…LYGI), 173–193 (VMII…LMSV), and 194–214 (LGLL…TVYI).

Belongs to the ATPase A chain family. In terms of assembly, F-type ATPases have 2 components, CF(1) - the catalytic core - and CF(0) - the membrane proton channel. CF(1) has five subunits: alpha(3), beta(3), gamma(1), delta(1), epsilon(1). CF(0) has four main subunits: a, b, b' and c.

The protein resides in the cell inner membrane. Its function is as follows. Key component of the proton channel; it plays a direct role in the translocation of protons across the membrane. This is ATP synthase subunit a 1 from Prosthecochloris aestuarii (strain DSM 271 / SK 413).